The sequence spans 273 residues: Formamidopyrimidine-DNA glycosylase (273 aa).

P2 (schiff-base intermediate with DNA) is an active-site residue. Residue E3 is the Proton donor of the active site. K58 acts as the Proton donor; for beta-elimination activity in catalysis. DNA contacts are provided by H91 and R110. An FPG-type zinc finger spans residues 238 to 272; it reads QVYGKTGQPCPRCASMIVKIKLGGRGTHLCPHCQK. R262 functions as the Proton donor; for delta-elimination activity in the catalytic mechanism.

The protein belongs to the FPG family. In terms of assembly, monomer. Requires Zn(2+) as cofactor.

It carries out the reaction Hydrolysis of DNA containing ring-opened 7-methylguanine residues, releasing 2,6-diamino-4-hydroxy-5-(N-methyl)formamidopyrimidine.. It catalyses the reaction 2'-deoxyribonucleotide-(2'-deoxyribose 5'-phosphate)-2'-deoxyribonucleotide-DNA = a 3'-end 2'-deoxyribonucleotide-(2,3-dehydro-2,3-deoxyribose 5'-phosphate)-DNA + a 5'-end 5'-phospho-2'-deoxyribonucleoside-DNA + H(+). In terms of biological role, involved in base excision repair of DNA damaged by oxidation or by mutagenic agents. Acts as a DNA glycosylase that recognizes and removes damaged bases. Has a preference for oxidized purines, such as 7,8-dihydro-8-oxoguanine (8-oxoG). Has AP (apurinic/apyrimidinic) lyase activity and introduces nicks in the DNA strand. Cleaves the DNA backbone by beta-delta elimination to generate a single-strand break at the site of the removed base with both 3'- and 5'-phosphates. In Streptococcus thermophilus (strain CNRZ 1066), this protein is Formamidopyrimidine-DNA glycosylase.